Reading from the N-terminus, the 319-residue chain is Lipoyl synthase (319 aa).

Residues Met1–Pro32 form a disordered region. The span at Arg16–Pro32 shows a compositional bias: basic and acidic residues. [4Fe-4S] cluster contacts are provided by Cys61, Cys66, Cys72, Cys87, Cys91, Cys94, and Ser300. The 217-residue stretch at Trp73–Leu289 folds into the Radical SAM core domain.

The protein belongs to the radical SAM superfamily. Lipoyl synthase family. [4Fe-4S] cluster is required as a cofactor.

It localises to the cytoplasm. The catalysed reaction is [[Fe-S] cluster scaffold protein carrying a second [4Fe-4S](2+) cluster] + N(6)-octanoyl-L-lysyl-[protein] + 2 oxidized [2Fe-2S]-[ferredoxin] + 2 S-adenosyl-L-methionine + 4 H(+) = [[Fe-S] cluster scaffold protein] + N(6)-[(R)-dihydrolipoyl]-L-lysyl-[protein] + 4 Fe(3+) + 2 hydrogen sulfide + 2 5'-deoxyadenosine + 2 L-methionine + 2 reduced [2Fe-2S]-[ferredoxin]. It participates in protein modification; protein lipoylation via endogenous pathway; protein N(6)-(lipoyl)lysine from octanoyl-[acyl-carrier-protein]: step 2/2. In terms of biological role, catalyzes the radical-mediated insertion of two sulfur atoms into the C-6 and C-8 positions of the octanoyl moiety bound to the lipoyl domains of lipoate-dependent enzymes, thereby converting the octanoylated domains into lipoylated derivatives. The polypeptide is Lipoyl synthase (Rhodopseudomonas palustris (strain BisB5)).